We begin with the raw amino-acid sequence, 1454 residues long: ABC transporter G family member 39 (1454 aa).

In terms of domain architecture, ABC transporter 1 spans L175–E448. ATP is bound at residue G208–T215. The ABC transmembrane type-2 1 domain occupies E526–F739. 7 consecutive transmembrane segments (helical) span residues F544–Y564, M584–M604, F623–I643, L663–I683, I689–I709, P716–M736, and F775–L795. A compositionally biased stretch (basic and acidic residues) spans E812–G824. A disordered region spans residues E812 to K838. The ABC transporter 2 domain occupies L853–G1106. G898–T905 provides a ligand contact to ATP. The region spanning T1178–V1392 is the ABC transmembrane type-2 2 domain. 7 consecutive transmembrane segments (helical) span residues A1199–I1219, N1231–V1251, I1285–I1303, F1312–M1332, I1342–I1362, I1367–L1387, and F1423–A1443.

It belongs to the ABC transporter superfamily. ABCG family. PDR (TC 3.A.1.205) subfamily.

The protein localises to the membrane. In terms of biological role, may be a general defense protein. This is ABC transporter G family member 39 (ABCG39) from Arabidopsis thaliana (Mouse-ear cress).